A 250-amino-acid chain; its full sequence is MHILLANDDGYLAPGLAVLHAALAPLGRITVIAPEQNHSGASNSLTLQRPLSIYEAREGVQKGFRFVNGTPTDCVHIALTGLLDEKPDLVVSGINQGQNMGEDVLYSGTVAAAIEGYLLGIPSIAFSQLHKGWEHLDAAARVARDIVERAIATPPVEPFLLNVNIPNLPFEHIKGYRATRLGKRHPSQPVIAQVNPRGDLNYWIGAAGDARDASEGTDFHATAEGYVSLTPLQLDLTHRSQLEALAQWLN.

Residues D8, D9, S39, and N95 each contribute to the a divalent metal cation site.

It belongs to the SurE nucleotidase family. A divalent metal cation serves as cofactor.

The protein resides in the cytoplasm. It carries out the reaction a ribonucleoside 5'-phosphate + H2O = a ribonucleoside + phosphate. Functionally, nucleotidase that shows phosphatase activity on nucleoside 5'-monophosphates. The protein is 5'-nucleotidase SurE of Cupriavidus pinatubonensis (strain JMP 134 / LMG 1197) (Cupriavidus necator (strain JMP 134)).